A 331-amino-acid chain; its full sequence is Cytosolic sulfotransferase 1 (331 aa).

Residue 74–79 (KSGTTW) participates in 3'-phosphoadenylyl sulfate binding. Catalysis depends on histidine 143, which acts as the Proton acceptor. Residues arginine 165, serine 173, tyrosine 231, and 297–299 (RKG) each bind 3'-phosphoadenylyl sulfate.

This sequence belongs to the sulfotransferase 1 family.

The protein localises to the cytoplasm. In terms of biological role, sulfotransferase that utilizes 3'-phospho-5'-adenylyl sulfate (PAPS) as sulfonate donor. The chain is Cytosolic sulfotransferase 1 (SOT1) from Arabidopsis thaliana (Mouse-ear cress).